Here is a 230-residue protein sequence, read N- to C-terminus: Orotidine 5'-phosphate decarboxylase (230 aa).

Residues Asp-11, Lys-34, 61–70 (DLKLHDIPNT), Thr-117, Arg-179, Gln-188, Gly-208, and Arg-209 each bind substrate. Lys-63 serves as the catalytic Proton donor.

It belongs to the OMP decarboxylase family. Type 1 subfamily. Homodimer.

The catalysed reaction is orotidine 5'-phosphate + H(+) = UMP + CO2. Its pathway is pyrimidine metabolism; UMP biosynthesis via de novo pathway; UMP from orotate: step 2/2. Catalyzes the decarboxylation of orotidine 5'-monophosphate (OMP) to uridine 5'-monophosphate (UMP). The protein is Orotidine 5'-phosphate decarboxylase of Streptococcus uberis (strain ATCC BAA-854 / 0140J).